Here is a 435-residue protein sequence, read N- to C-terminus: 3-phosphoshikimate 1-carboxyvinyltransferase (435 aa).

The 3-phosphoshikimate site is built by K23, S24, and R28. K23 contacts phosphoenolpyruvate. Residues G97 and R125 each coordinate phosphoenolpyruvate. Positions 170, 171, 172, 198, 315, 338, and 342 each coordinate 3-phosphoshikimate. Q172 provides a ligand contact to phosphoenolpyruvate. Catalysis depends on D315, which acts as the Proton acceptor. 3 residues coordinate phosphoenolpyruvate: R346, R388, and K413.

The protein belongs to the EPSP synthase family. In terms of assembly, monomer.

Its subcellular location is the cytoplasm. It catalyses the reaction 3-phosphoshikimate + phosphoenolpyruvate = 5-O-(1-carboxyvinyl)-3-phosphoshikimate + phosphate. Its pathway is metabolic intermediate biosynthesis; chorismate biosynthesis; chorismate from D-erythrose 4-phosphate and phosphoenolpyruvate: step 6/7. Catalyzes the transfer of the enolpyruvyl moiety of phosphoenolpyruvate (PEP) to the 5-hydroxyl of shikimate-3-phosphate (S3P) to produce enolpyruvyl shikimate-3-phosphate and inorganic phosphate. The polypeptide is 3-phosphoshikimate 1-carboxyvinyltransferase (Buchnera aphidicola subsp. Cinara cedri (strain Cc)).